The chain runs to 865 residues: Alanine--tRNA ligase (865 aa).

Zn(2+) is bound by residues histidine 552, histidine 556, cysteine 654, and histidine 658.

This sequence belongs to the class-II aminoacyl-tRNA synthetase family. The cofactor is Zn(2+).

Its subcellular location is the cytoplasm. It catalyses the reaction tRNA(Ala) + L-alanine + ATP = L-alanyl-tRNA(Ala) + AMP + diphosphate. Its function is as follows. Catalyzes the attachment of alanine to tRNA(Ala) in a two-step reaction: alanine is first activated by ATP to form Ala-AMP and then transferred to the acceptor end of tRNA(Ala). Also edits incorrectly charged Ser-tRNA(Ala) and Gly-tRNA(Ala) via its editing domain. The polypeptide is Alanine--tRNA ligase (Coxiella burnetii (strain Dugway 5J108-111)).